A 377-amino-acid polypeptide reads, in one-letter code: MRASFFWFLPLLLILASVAQGQPRPKPGIRRKPKPRPTPSFPQPHEPAEPTDLPPPLPPGPPSVFPDCPRECYCPPDFPSALYCDSRNLRKVPIIPPRIHYLYLQNNFITELPVESFKNATGLRWINLDNNRIRKVDQRVLEKLPGLAFLYMDKNQLEEVPSALPRNLEQLRLSQNLISRIPPGVFSKLENLLLLDLQHNRLSDGVFKADTFQGLKNLMQLNLAHNILRRMPPKVPPAIHQLYLDSNKIETIPSGYFKDFPNLAFIRMNYNKLSDRGLPKNSFNISNLLVLHLSHNKISNVPAISNKLEHLYLNNNSIEKINGTQICPSNLVAFHDFSSDLENVPHLRYLRLDGNFLKPPIPLDLMMCFRLLQSVVI.

Residues methionine 1–glycine 21 form the signal peptide. The disordered stretch occupies residues glutamine 22–proline 61. Pro residues-rich tracts occupy residues arginine 36–histidine 45 and aspartate 52–proline 61. 12 LRR repeats span residues arginine 90 to isoleucine 109, threonine 110 to isoleucine 133, arginine 134 to leucine 157, glutamate 158 to isoleucine 178, serine 179 to leucine 202, serine 203 to leucine 228, arginine 229 to isoleucine 249, glutamate 250 to leucine 273, serine 274 to isoleucine 298, serine 299 to isoleucine 318, glutamate 319 to leucine 357, and lysine 358 to isoleucine 377. Asparagine 119 carries N-linked (GlcNAc...) asparagine glycosylation. N-linked (GlcNAc...) asparagine glycans are attached at residues asparagine 284, asparagine 315, and asparagine 322. Cysteine 327 and cysteine 368 are oxidised to a cystine.

It belongs to the small leucine-rich proteoglycan (SLRP) family. SLRP class II subfamily. In terms of assembly, binds the basement membrane heparan sulfate proteoglycan perlecan and triple helical collagens type I and type II. In terms of processing, glycosylated; contains heparan sulfate.

Its subcellular location is the secreted. The protein localises to the extracellular space. The protein resides in the extracellular matrix. Functionally, may anchor basement membranes to the underlying connective tissue. This Rattus norvegicus (Rat) protein is Prolargin (Prelp).